Here is a 720-residue protein sequence, read N- to C-terminus: Dedicator of cytokinesis protein 9 (720 aa).

A DOCKER domain is found at 186 to 638 (KSYASTPELR…LSDIIVPRIC (453 aa)). The interval 277 to 638 (DEEASMMEDV…LSDIIVPRIC (362 aa)) is interaction with CDC42.

This sequence belongs to the DOCK family. In terms of assembly, homodimer. Interacts preferentially with nucleotide-depleted CDC42.

The protein resides in the endomembrane system. Guanine nucleotide-exchange factor (GEF) that activates CDC42 by exchanging bound GDP for free GTP. Overexpression induces filopodia formation. This is Dedicator of cytokinesis protein 9 (Dock9) from Rattus norvegicus (Rat).